A 511-amino-acid polypeptide reads, in one-letter code: Pickpocket protein 19 (511 aa).

2 helical membrane-spanning segments follow: residues 59-79 (LWLAIVLGAVITGFSLYTVLM) and 471-491 (GIISLYIGASVMSFIELLFVL).

The protein belongs to the amiloride-sensitive sodium channel (TC 1.A.6) family. In terms of tissue distribution, expressed in the tracheal system. Expressed in the taste-sensing terminal organ of the larval head. In adults, expressed in hairs on the tibia, femur and wing margin, but not in hairs on the tarsi of the leg.

Its subcellular location is the membrane. Part of a complex that plays a role in tracheal liquid clearance. In both larvae and adults, contributes to the behavioral response to salt. Probable role in sodium transport. The polypeptide is Pickpocket protein 19 (ppk19) (Drosophila melanogaster (Fruit fly)).